Reading from the N-terminus, the 186-residue chain is Ribosome-recycling factor (186 aa).

This sequence belongs to the RRF family.

The protein resides in the cytoplasm. Functionally, responsible for the release of ribosomes from messenger RNA at the termination of protein biosynthesis. May increase the efficiency of translation by recycling ribosomes from one round of translation to another. The sequence is that of Ribosome-recycling factor from Rickettsia canadensis (strain McKiel).